Consider the following 226-residue polypeptide: MLANGAIVFLAAALGVSGHYTWPRVNDGADWQQVRKADNWQDNGYVGDVTSPQIRCFQATPSPAPSVLNTTAGSTVTYWANPDVYHPGPVQFYMARVPDGEDINSWNGDGAVWFKVYEDHPTFGAQLTWPSTGKSSFAVPIPPCIKSGYYLLRAEQIGLHVAQSVGGAQFYISCAQLSVTGGGSTEPPNKVAFPGAYSATDPGILINIYYPVPTSYQNPGPAVFSC.

A signal peptide spans 1–18 (MLANGAIVFLAAALGVSG). A Cu(2+)-binding site is contributed by H19. 2 disulfides stabilise this stretch: C56/C174 and C144/C226. N-linked (GlcNAc...) asparagine glycosylation is present at N69. H86 lines the Cu(2+) pocket. Residues H160 and Q169 each coordinate O2. Position 171 (Y171) interacts with Cu(2+).

Belongs to the polysaccharide monooxygenase AA9 family. Cu(2+) is required as a cofactor.

It localises to the secreted. The catalysed reaction is [(1-&gt;4)-beta-D-glucosyl]n+m + reduced acceptor + O2 = 4-dehydro-beta-D-glucosyl-[(1-&gt;4)-beta-D-glucosyl]n-1 + [(1-&gt;4)-beta-D-glucosyl]m + acceptor + H2O.. Functionally, lytic polysaccharide monooxygenase (LPMO) that depolymerizes crystalline and amorphous polysaccharides via the oxidation of scissile alpha- or beta-(1-4)-glycosidic bonds, yielding C1 and C4 oxidation products. Catalysis by LPMOs requires the reduction of the active-site copper from Cu(II) to Cu(I) by a reducing agent and H(2)O(2) or O(2) as a cosubstrate. Shows endoglucanase activity on tamarind xyloglucan, as well as on beechwood xylan when combined with phosphoric acid swollen cellulose (PASC). Shows no activity on wheat arabinoxylan, konjac glucomannan, acetylated spruce galactoglucomannan, or cellopentaose. The sequence is that of AA9 family lytic polysaccharide monooxygenase E from Thermothielavioides terrestris (strain ATCC 38088 / NRRL 8126) (Thielavia terrestris).